The sequence spans 430 residues: Dynactin subunit 2 (430 aa).

Disordered stretches follow at residues 1 to 51 and 201 to 228; these read MSEG…IDRS and SLSS…SSSS. The span at 32–44 shows a compositional bias: polar residues; sequence SISNLADESSELV. 2 coiled-coil regions span residues 241–319 and 397–430; these read TGEQ…QDET and DDSF…QQQQ.

This sequence belongs to the dynactin subunit 2 family. In terms of assembly, subunit of dynactin, a multiprotein complex associated with dynein.

Its subcellular location is the cytoplasm. The protein localises to the cytoskeleton. The protein resides in the membrane. In terms of biological role, modulates cytoplasmic dynein binding to an organelle, and plays a role in prometaphase chromosome alignment and spindle organization during mitosis. This Dictyostelium discoideum (Social amoeba) protein is Dynactin subunit 2 (dynB).